Reading from the N-terminus, the 270-residue chain is Glutamate racemase (270 aa).

Substrate-binding positions include 7-8 and 39-40; these read DS and YG. Cysteine 70 (proton donor/acceptor) is an active-site residue. 71 to 72 contributes to the substrate binding site; the sequence is NT. Residue cysteine 194 is the Proton donor/acceptor of the active site. Residue 195-196 coordinates substrate; the sequence is TH.

Belongs to the aspartate/glutamate racemases family.

The enzyme catalyses L-glutamate = D-glutamate. It functions in the pathway cell wall biogenesis; peptidoglycan biosynthesis. Its function is as follows. Provides the (R)-glutamate required for cell wall biosynthesis. The polypeptide is Glutamate racemase (Jannaschia sp. (strain CCS1)).